The chain runs to 443 residues: CBL-interacting protein kinase 2 (443 aa).

In terms of domain architecture, Protein kinase spans 13–267 (YEMGKLLGQG…MDKIMENPWF (255 aa)). Residues 19-27 (LGQGTFAKV) and Lys-42 contribute to the ATP site. The Proton acceptor role is filled by Asp-135. An activation loop region spans residues 153–182 (DFGLSALADCKRQDGLLHTTCGTPAYVAPE). An NAF domain is found at 302–329 (TLEKKPSNLNAFDIISLSTGLDLSGMFE). Residues 333-362 (KKESKFTSTSTASTIISKIEDIAKGLRLKL) are PPI.

This sequence belongs to the protein kinase superfamily. CAMK Ser/Thr protein kinase family. SNF1 subfamily. Mn(2+) is required as a cofactor.

It carries out the reaction L-seryl-[protein] + ATP = O-phospho-L-seryl-[protein] + ADP + H(+). The catalysed reaction is L-threonyl-[protein] + ATP = O-phospho-L-threonyl-[protein] + ADP + H(+). Its function is as follows. CIPK serine-threonine protein kinases interact with CBL proteins. Binding of a CBL protein to the regulatory NAF domain of CIPK protein lead to the activation of the kinase in a calcium-dependent manner. The polypeptide is CBL-interacting protein kinase 2 (CIPK2) (Oryza sativa subsp. japonica (Rice)).